We begin with the raw amino-acid sequence, 163 residues long: Phosphopantetheine adenylyltransferase (163 aa).

Position 11 (Ser11) interacts with substrate. ATP-binding positions include 11 to 12 (SF) and His19. Lys43, Leu75, and Arg89 together coordinate substrate. ATP contacts are provided by residues 90–92 (GLR), Glu100, and 125–131 (FGYLSSS).

This sequence belongs to the bacterial CoaD family. Homohexamer. The cofactor is Mg(2+).

It is found in the cytoplasm. It carries out the reaction (R)-4'-phosphopantetheine + ATP + H(+) = 3'-dephospho-CoA + diphosphate. Its pathway is cofactor biosynthesis; coenzyme A biosynthesis; CoA from (R)-pantothenate: step 4/5. Functionally, reversibly transfers an adenylyl group from ATP to 4'-phosphopantetheine, yielding dephospho-CoA (dPCoA) and pyrophosphate. This chain is Phosphopantetheine adenylyltransferase, found in Geobacter metallireducens (strain ATCC 53774 / DSM 7210 / GS-15).